The chain runs to 544 residues: Putative ligase Rv1013 (544 aa).

Lys-528 participates in a covalent cross-link: Isoglutamyl lysine isopeptide (Lys-Gln) (interchain with Q-Cter in protein Pup).

The protein belongs to the ATP-dependent AMP-binding enzyme family. In terms of processing, pupylated at Lys-528 by the prokaryotic ubiquitin-like protein Pup, which probably leads to its degradation by the proteasome.

The sequence is that of Putative ligase Rv1013 (pks16) from Mycobacterium tuberculosis (strain ATCC 25618 / H37Rv).